A 185-amino-acid polypeptide reads, in one-letter code: dCTP deaminase (185 aa).

Residues 107-112, 131-133, Gln152, Tyr166, and Gln176 contribute to the dCTP site; these read KSTYAR and TLE. Glu133 (proton donor/acceptor) is an active-site residue.

Belongs to the dCTP deaminase family. Homotrimer.

The catalysed reaction is dCTP + H2O + H(+) = dUTP + NH4(+). The protein operates within pyrimidine metabolism; dUMP biosynthesis; dUMP from dCTP (dUTP route): step 1/2. Functionally, catalyzes the deamination of dCTP to dUTP. The sequence is that of dCTP deaminase from Anaplasma phagocytophilum (strain HZ).